A 259-amino-acid chain; its full sequence is Ubiquinol-cytochrome c reductase complex assembly factor 1 (259 aa).

The protein belongs to the CBP3 family. As to quaternary structure, interacts with sloth1; the interaction is probably involved in the assembly and stability of the mitochondrial ubiquinol-cytochrome c reductase complex.

The protein localises to the mitochondrion inner membrane. In terms of biological role, required for the assembly of the ubiquinol-cytochrome c reductase complex (mitochondrial respiratory chain complex III or cytochrome b-c1 complex). May be involved in cytochrome b translation and/or stability. The sequence is that of Ubiquinol-cytochrome c reductase complex assembly factor 1 from Drosophila melanogaster (Fruit fly).